The primary structure comprises 115 residues: Large ribosomal subunit protein bL19 (115 aa).

The protein belongs to the bacterial ribosomal protein bL19 family.

Functionally, this protein is located at the 30S-50S ribosomal subunit interface and may play a role in the structure and function of the aminoacyl-tRNA binding site. The protein is Large ribosomal subunit protein bL19 (rplS) of Thermotoga maritima (strain ATCC 43589 / DSM 3109 / JCM 10099 / NBRC 100826 / MSB8).